The following is a 372-amino-acid chain: Probable G-protein coupled receptor 45 (372 aa).

Topologically, residues 1–38 are extracellular; it reads MACNSTSLEAYTYLLLNTSNASDSGSTQLPAPLRISLA. 3 N-linked (GlcNAc...) asparagine glycosylation sites follow: Asn-4, Asn-17, and Asn-20. A helical membrane pass occupies residues 39–59; sequence IVMLLMTVVGFLGNTVVCIIV. Over 60-75 the chain is Cytoplasmic; sequence YQRPAMRSAINLLLAT. The helical transmembrane segment at 76-96 threads the bilayer; sequence LAFSDIMLSLCCMPFTAVTLI. At 97 to 109 the chain is on the extracellular side; the sequence is TVRWHFGDHFCRL. A helical membrane pass occupies residues 110 to 130; the sequence is SATLYWFFVLEGVAILLIISV. Residues 131 to 149 lie on the Cytoplasmic side of the membrane; the sequence is DRFLIIVQRQDKLNPRRAK. The chain crosses the membrane as a helical span at residues 150 to 170; sequence VIIAVSWVLSFCIAGPSLTGW. The Extracellular segment spans residues 171–198; sequence TLVEVPARAPQCVLGYTELPADRAYVVT. Residues 199 to 219 form a helical membrane-spanning segment; it reads LVVAVFFAPFGVMLCAYMCIL. Over 220–268 the chain is Cytoplasmic; that stretch reads NTVRKNAVRVHNQSDSLDLRQLTRAGLRRLQRQQQVSVDLSFKTKAFTT. The chain crosses the membrane as a helical span at residues 269 to 289; it reads ILILFVGFSLCWLPHSVYSLL. Residues 290 to 305 lie on the Extracellular side of the membrane; it reads SVFSQRFYCGSSFYAT. Residues 306 to 326 form a helical membrane-spanning segment; that stretch reads STCVLWLSYLKSVFNPIVYCW. The Cytoplasmic portion of the chain corresponds to 327–372; it reads RIKKFREACIELLPQTFQILPKVPERIRRRIQPSTVYVCNENQSAV.

Belongs to the G-protein coupled receptor 1 family. In terms of tissue distribution, expressed in brain; detected in the basal forebrain, frontal cortex, and caudate, but not in thalamus, hippocampus, or putamen.

Its subcellular location is the cell membrane. In terms of biological role, orphan receptor. May play a role in brain function. The polypeptide is Probable G-protein coupled receptor 45 (GPR45) (Homo sapiens (Human)).